A 165-amino-acid polypeptide reads, in one-letter code: Late embryogenesis abundant protein D-113 (165 aa).

Residues 1–13 (MQSMKDAAASAKA) show a composition bias toward low complexity. Disordered regions lie at residues 1–76 (MQSM…IGGT) and 92–165 (GGTG…YRSY). The segment covering 14–60 (GMEKAKASMQEKVDQMKTRDPNEKEMARERKEERQEDAELRKQEARH) has biased composition (basic and acidic residues). The segment covering 67–76 (HVGGGGIGGT) has biased composition (gly residues). Residues 132 to 155 (TTGNQDFPNAASNNAGTRRNTRGG) show a composition bias toward polar residues.

The protein belongs to the LEA type 1 family.

LEA proteins are late embryonic proteins abundant in higher plant seed embryos. There are two subsets of LEA proteins (5a and 5b), the first ones are expressed when the cotyledon weight reach 80 mg and the second set are expressed above 100 mg. The function of those proteins is not known. The polypeptide is Late embryogenesis abundant protein D-113 (Gossypium hirsutum (Upland cotton)).